The sequence spans 358 residues: Aerobic magnesium-protoporphyrin IX monomethyl ester [oxidative] cyclase (358 aa).

Belongs to the AcsF family. The cofactor is Fe cation.

The enzyme catalyses Mg-protoporphyrin IX 13-monomethyl ester + 3 NADPH + 3 O2 + 2 H(+) = 3,8-divinyl protochlorophyllide a + 3 NADP(+) + 5 H2O. The protein operates within porphyrin-containing compound metabolism; chlorophyll biosynthesis. In terms of biological role, catalyzes the formation of the isocyclic ring in chlorophyll biosynthesis in aerobic conditions. Mediates the cyclase reaction, which results in the formation of divinylprotochlorophyllide (Pchlide) characteristic of all chlorophylls from magnesium-protoporphyrin IX 13-monomethyl ester (MgPMME). This is Aerobic magnesium-protoporphyrin IX monomethyl ester [oxidative] cyclase from Rubrivivax gelatinosus (Rhodocyclus gelatinosus).